Reading from the N-terminus, the 525-residue chain is Plant UBX domain-containing protein 13 (525 aa).

The region spanning 2–44 (ATPTQEAIDTFMTITGSSNAVAVRKLEEYRGNLNRAVNAYFTH) is the UBA-like domain. Disordered regions lie at residues 67–96 (RTTD…PPFV), 150–172 (DDDN…SAEN), and 194–328 (METG…EEHD). Over residues 209–229 (AEREVLRSEGWKASSSEREAS) the composition is skewed to basic and acidic residues. Residues 254–274 (SEDDDDDDDDDPDYVEEEEEP) show a composition bias toward acidic residues. At serine 362 the chain carries Phosphoserine. Residues 380–436 (LASLEADRVKAEARRLEEEAARVEAIEEAKRKEEEARRKVEEEQELERQLVSKEASL) adopt a coiled-coil conformation. A compositionally biased stretch (basic and acidic residues) spans 408 to 430 (AKRKEEEARRKVEEEQELERQLV). The tract at residues 408–446 (AKRKEEEARRKVEEEQELERQLVSKEASLPQEPPAGEEN) is disordered. The UBX domain occupies 443–521 (GEENAITLQV…GLTSKQEALF (79 aa)).

The polypeptide is Plant UBX domain-containing protein 13 (Arabidopsis thaliana (Mouse-ear cress)).